The sequence spans 315 residues: WD repeat domain-containing protein 83 (315 aa).

7 WD repeats span residues 23-62, 65-104, 107-146, 151-188, 189-228, 233-272, and 275-313; these read CQQG…LLKT, GHGY…VTRK, GHAG…MEPI, ESQD…LQVD, YIGS…MLGE, VNKG…LTLK, and VGKA…AAEN.

The protein belongs to the WD repeat MORG1 family.

It is found in the cytoplasm. In terms of biological role, molecular scaffold protein for various multimeric protein complexes. Acts as a module in the assembly of a multicomponent scaffold for the ERK pathway, linking ERK responses to specific agonists. Also involved in response to hypoxia by acting as a negative regulator of HIF1A/HIF-1-alpha. This chain is WD repeat domain-containing protein 83 (wdr83), found in Danio rerio (Zebrafish).